The primary structure comprises 477 residues: Protein kinase C and casein kinase substrate in neurons protein 2 (477 aa).

Positions 11 to 282 constitute an F-BAR domain; that stretch reads VEVSSDSFWE…AIKSADAMED (272 aa). The stretch at 25–274 forms a coiled coil; that stretch reads KRTVKRIDDG…SIYRELEYAI (250 aa). 2 stretches are compositionally biased toward basic and acidic residues: residues 163–176 and 186–216; these read CKEE…ETNS and QLKK…KDLD. Disordered regions lie at residues 163-218 and 314-412; these read CKEE…LDGT and RREK…PFDE. A compositionally biased stretch (low complexity) spans 328-341; it reads GISQSGEQSSIQNQ. The segment covering 342 to 357 has biased composition (polar residues); it reads HSSHLSVQSAQSTNNP. Positions 356–358 match the NPF1 motif; sequence NPF. The span at 370–388 shows a compositional bias: basic and acidic residues; sequence TENKKIENVGSYEKTHPAE. Over residues 395 to 407 the composition is skewed to polar residues; sequence NNPFNPSDTNGDN. Positions 396-398 match the NPF2 motif; the sequence is NPF. Residues 408–410 carry the NPF3 motif; sequence NPF. An SH3 domain is found at 417 to 477; it reads TLEVRVRALY…YPANYVESVQ (61 aa).

It belongs to the PACSIN family. In terms of assembly, interacts with adam13 through the SH3 domains. In terms of processing, phosphorylated. In terms of tissue distribution, ubiquitously expressed with higher expression in the ectoderm, the neuroectoderm, and dorsal mesoderm layers.

The protein resides in the cytoplasm. Its subcellular location is the cytoskeleton. It localises to the cytoplasmic vesicle membrane. The protein localises to the cell projection. It is found in the ruffle membrane. The protein resides in the early endosome. Its subcellular location is the recycling endosome membrane. It localises to the cell membrane. The protein localises to the membrane. It is found in the caveola. The protein resides in the cell junction. Its subcellular location is the adherens junction. Regulates the morphogenesis and endocytosis of caveolae. Lipid-binding protein that is able to promote the tubulation of the phosphatidic acid-containing membranes it preferentially binds. Plays a role in intracellular vesicle-mediated transport. Involved in the endocytosis of cell-surface receptors like the EGF receptor, contributing to its internalization in the absence of EGF stimulus. In Xenopus laevis (African clawed frog), this protein is Protein kinase C and casein kinase substrate in neurons protein 2 (pacsin2).